Here is a 466-residue protein sequence, read N- to C-terminus: MNGALGNSSASVSGGEGAGGPAPFLVKTYEMVDDSSTDQIVSWSANNNSFIVWNHAEFSRLLLPTYFKHNNFSSFIRQLNTYGFRKIDPERWEFLNDDFIKDQKHLLKNIHRRKPIHSHSHPPASSTDQERAVLQEQMDKLSREKAAIEAKLLKFKQQKVVAKHQFEEMTEHVDDMENRQKKLLNFLETAIRNPTFVKNFGKKVEQLDISAYNKKRRLPEVEQSKPPSEDSHLDNSSGSSRRESGNIFHQNFSNKLRLELSPADSDMNMVSHSIQSSNEEGASPKGILSGGDPNTTLTKREGLPFAPEALELADTGTCPRRLLLNDNTRVETLQQRLTSSEETDGSFSCHLNLTLASAPLPDKTASQIAKTTLKSQELNFNSIETSASEKNRGRQEIAVGGSQANAAPPARVNDVFWEQFLTERPGSSDNEEASSTYRGNPYEEQEEKRNGSMMLRNTKNIEQLTL.

Residues 21-115 (PAPFLVKTYE…LLKNIHRRKP (95 aa)) mediate DNA binding. The segment at 125-191 (SSTDQERAVL…KLLNFLETAI (67 aa)) is hydrophobic repeat HR-A/B. A Bipartite nuclear localization signal motif is present at residues 198–217 (KNFGKKVEQLDISAYNKKRR). Disordered regions lie at residues 215-248 (KRRLPEVEQSKPPSEDSHLDNSSGSSRRESGNIF), 272-300 (HSIQSSNEEGASPKGILSGGDPNTTLTKR), and 422-466 (TERP…QLTL). The segment covering 218-233 (LPEVEQSKPPSEDSHL) has biased composition (basic and acidic residues). An AHA motif is present at residues 414–423 (DVFWEQFLTE). 2 stretches are compositionally biased toward polar residues: residues 425-438 (PGSSDNEEASSTYR) and 455-466 (LRNTKNIEQLTL). Positions 461–466 (IEQLTL) match the Nuclear export signal motif.

Belongs to the HSF family. Class A subfamily. Homotrimer. Exhibits temperature-dependent phosphorylation.

The protein localises to the cytoplasm. It is found in the nucleus. Functionally, transcriptional activator that specifically binds DNA sequence 5'-AGAAnnTTCT-3' known as heat shock promoter elements (HSE). This chain is Heat stress transcription factor A-5 (HSFA5), found in Arabidopsis thaliana (Mouse-ear cress).